Consider the following 61-residue polypeptide: Small ribosomal subunit protein uS14 (61 aa).

Zn(2+) is bound by residues Cys24, Cys27, Cys40, and Cys43.

This sequence belongs to the universal ribosomal protein uS14 family. Zinc-binding uS14 subfamily. In terms of assembly, part of the 30S ribosomal subunit. Contacts proteins S3 and S10. It depends on Zn(2+) as a cofactor.

Functionally, binds 16S rRNA, required for the assembly of 30S particles and may also be responsible for determining the conformation of the 16S rRNA at the A site. In Mycoplasma pneumoniae (strain ATCC 29342 / M129 / Subtype 1) (Mycoplasmoides pneumoniae), this protein is Small ribosomal subunit protein uS14.